Consider the following 286-residue polypeptide: 1D-myo-inositol 2-acetamido-2-deoxy-alpha-D-glucopyranoside deacetylase (286 aa).

3 residues coordinate Zn(2+): His-12, Asp-15, and His-147.

Belongs to the MshB deacetylase family. Zn(2+) is required as a cofactor.

The catalysed reaction is 1D-myo-inositol 2-acetamido-2-deoxy-alpha-D-glucopyranoside + H2O = 1D-myo-inositol 2-amino-2-deoxy-alpha-D-glucopyranoside + acetate. Catalyzes the deacetylation of 1D-myo-inositol 2-acetamido-2-deoxy-alpha-D-glucopyranoside (GlcNAc-Ins) in the mycothiol biosynthesis pathway. In Thermobifida fusca (strain YX), this protein is 1D-myo-inositol 2-acetamido-2-deoxy-alpha-D-glucopyranoside deacetylase.